The chain runs to 393 residues: Arrestin-C (393 aa).

The segment covering 371 to 386 has biased composition (basic and acidic residues); the sequence is FARQEDGGEEKQKALA. The tract at residues 371–393 is disordered; sequence FARQEDGGEEKQKALAEEGDEGS.

It belongs to the arrestin family. As to quaternary structure, homodimer; disulfide-linked in response to retinal illumination. Interacts with CXCR4; the interaction is dependent on the C-terminal phosphorylation of CXCR4 and modulates the calcium ion mobilization activity of CXCR4.

Its subcellular location is the photoreceptor inner segment. The protein resides in the cell projection. The protein localises to the cilium. It localises to the photoreceptor outer segment. Its function is as follows. May play a role in an as yet undefined retina-specific signal transduction. Could bind to photoactivated-phosphorylated red/green opsins. This chain is Arrestin-C (ARR3), found in Ictidomys tridecemlineatus (Thirteen-lined ground squirrel).